The following is a 353-amino-acid chain: Photosystem II D2 protein (353 aa).

At Thr-2 the chain carries N-acetylthreonine. Thr-2 carries the post-translational modification Phosphothreonine. Residues 41-61 (CAYFALGGWFTGTTFVTSWYT) traverse the membrane as a helical segment. Chlorophyll a is bound at residue His-118. Residues 125-141 (GFMLRQFELARSVQLRP) traverse the membrane as a helical segment. Pheophytin a contacts are provided by Gln-130 and Asn-143. The chain crosses the membrane as a helical span at residues 153–166 (VFVSVSLIYPLGQA). His-198 serves as a coordination point for chlorophyll a. Residues 208-228 (AALLCAIHGATVENTLFEDGD) form a helical membrane-spanning segment. 2 residues coordinate a plastoquinone: His-215 and Phe-262. His-215 is a binding site for Fe cation. Fe cation is bound at residue His-269. Residues 279–295 (GLWMSAIGVVGLALNLR) form a helical membrane-spanning segment.

This sequence belongs to the reaction center PufL/M/PsbA/D family. As to quaternary structure, PSII is composed of 1 copy each of membrane proteins PsbA, PsbB, PsbC, PsbD, PsbE, PsbF, PsbH, PsbI, PsbJ, PsbK, PsbL, PsbM, PsbT, PsbX, PsbY, PsbZ, Psb30/Ycf12, at least 3 peripheral proteins of the oxygen-evolving complex and a large number of cofactors. It forms dimeric complexes. It depends on The D1/D2 heterodimer binds P680, chlorophylls that are the primary electron donor of PSII, and subsequent electron acceptors. It shares a non-heme iron and each subunit binds pheophytin, quinone, additional chlorophylls, carotenoids and lipids. There is also a Cl(-1) ion associated with D1 and D2, which is required for oxygen evolution. The PSII complex binds additional chlorophylls, carotenoids and specific lipids. as a cofactor.

It is found in the plastid. The protein resides in the chloroplast thylakoid membrane. The catalysed reaction is 2 a plastoquinone + 4 hnu + 2 H2O = 2 a plastoquinol + O2. Functionally, photosystem II (PSII) is a light-driven water:plastoquinone oxidoreductase that uses light energy to abstract electrons from H(2)O, generating O(2) and a proton gradient subsequently used for ATP formation. It consists of a core antenna complex that captures photons, and an electron transfer chain that converts photonic excitation into a charge separation. The D1/D2 (PsbA/PsbD) reaction center heterodimer binds P680, the primary electron donor of PSII as well as several subsequent electron acceptors. D2 is needed for assembly of a stable PSII complex. In Angiopteris evecta (Mule's foot fern), this protein is Photosystem II D2 protein.